Reading from the N-terminus, the 338-residue chain is Rho GTPase-activating protein gacA (338 aa).

The Rho-GAP domain occupies 149-327 (NTLEHVEDEG…NVLSHKVAVH (179 aa)).

It is found in the cytoplasm. Functionally, rho GTPase-activating protein involved in the signal transduction pathway. The polypeptide is Rho GTPase-activating protein gacA (gacA) (Dictyostelium discoideum (Social amoeba)).